Here is a 205-residue protein sequence, read N- to C-terminus: Small ribosomal subunit protein uS4 (205 aa).

The disordered stretch occupies residues 1–46 (MSKRHSAKYKIDRRMGENLWGRPKSPVNQRSYGPGQHGQRRKQKVS). An S4 RNA-binding domain is found at 94–154 (SRLDAIVYRA…EKSRNMALVL (61 aa)).

It belongs to the universal ribosomal protein uS4 family. In terms of assembly, part of the 30S ribosomal subunit. Contacts protein S5. The interaction surface between S4 and S5 is involved in control of translational fidelity.

Functionally, one of the primary rRNA binding proteins, it binds directly to 16S rRNA where it nucleates assembly of the body of the 30S subunit. In terms of biological role, with S5 and S12 plays an important role in translational accuracy. The protein is Small ribosomal subunit protein uS4 of Caulobacter sp. (strain K31).